A 1102-amino-acid polypeptide reads, in one-letter code: Phosphatidylinositol 4,5-bisphosphate 3-kinase catalytic subunit gamma isoform (1102 aa).

The PI3K-ABD domain maps to 34-141 (SMELIPIEFV…PGQIHLVQRH (108 aa)). The PI3K-RBD domain occupies 217 to 309 (NNCIFIVIHR…GEEIHVVLDT (93 aa)). A C2 PI3K-type domain is found at 357–521 (CDRKFRVKIR…NSMSISILLD (165 aa)). The 183-residue stretch at 541 to 723 (DRVRAEMPNQ…AVILEAYLRG (183 aa)) folds into the PIK helical domain. The 284-residue stretch at 797 to 1080 (AIEKCKVMAS…QIEVCRDKGW (284 aa)) folds into the PI3K/PI4K catalytic domain. The interval 803–809 (VMASKKK) is G-loop. ATP is bound by residues 829–838 (GIIFKHGDDL) and 864–872 (LLPYGCIST). The catalytic loop stretch occupies residues 943–951 (GIGDRHNDN). 961 to 969 (FHIDFGHIL) serves as a coordination point for ATP. The tract at residues 962–988 (HIDFGHILGNYKSFLGINKERVPFVLT) is activation loop. T1024 is subject to Phosphothreonine; by PKA. S1101 carries the post-translational modification Phosphoserine; by autocatalysis.

It belongs to the PI3/PI4-kinase family. Heterodimer of a catalytic subunit PIK3CG and a PIK3R5 or PIK3R6 regulatory subunit. Interacts with GRK2 through the PIK helical domain. Interaction with GRK2 is required for targeting to agonist-occupied receptor. Interacts with PDE3B; regulates PDE3B activity and thereby cAMP levels in cells. Interacts with TPM2. Interacts with EPHA8; regulates integrin-mediated cell adhesion to substrate. Interacts with HRAS; the interaction is required for membrane recruitment and beta-gamma G protein dimer-dependent activation of the PI3K gamma complex PIK3CG:PIK3R6. In terms of processing, autophosphorylation at Ser-1101 has no effect on the phosphatidylinositol-4,5-bisphosphate 3-kinase activity. In terms of tissue distribution, pancreas, skeletal muscle, liver and heart.

It localises to the cytoplasm. Its subcellular location is the cell membrane. The catalysed reaction is a 1,2-diacyl-sn-glycero-3-phospho-(1D-myo-inositol) + ATP = a 1,2-diacyl-sn-glycero-3-phospho-(1D-myo-inositol-3-phosphate) + ADP + H(+). It catalyses the reaction a 1,2-diacyl-sn-glycero-3-phospho-(1D-myo-inositol-4,5-bisphosphate) + ATP = a 1,2-diacyl-sn-glycero-3-phospho-(1D-myo-inositol-3,4,5-trisphosphate) + ADP + H(+). It carries out the reaction a 1,2-diacyl-sn-glycero-3-phospho-(1D-myo-inositol 4-phosphate) + ATP = a 1,2-diacyl-sn-glycero-3-phospho-(1D-myo-inositol-3,4-bisphosphate) + ADP + H(+). The enzyme catalyses L-seryl-[protein] + ATP = O-phospho-L-seryl-[protein] + ADP + H(+). Its pathway is phospholipid metabolism; phosphatidylinositol phosphate biosynthesis. With respect to regulation, activated by both the alpha and the beta-gamma G proteins following stimulation of G protein-coupled receptors (GPCRs). Activation by GPCRs is assisted by the regulatory subunits (PIK3R5 or PIK3R6) leading to the translocation from the cytosol to the plasma membrane and to kinase activation. Inhibited by AS-604850 and AS-605240. Phosphoinositide-3-kinase (PI3K) that phosphorylates PtdIns(4,5)P2 (Phosphatidylinositol 4,5-bisphosphate) to generate phosphatidylinositol 3,4,5-trisphosphate (PIP3). PIP3 plays a key role by recruiting PH domain-containing proteins to the membrane, including AKT1 and PDPK1, activating signaling cascades involved in cell growth, survival, proliferation, motility and morphology. Links G-protein coupled receptor activation to PIP3 production. Involved in immune, inflammatory and allergic responses. Modulates leukocyte chemotaxis to inflammatory sites and in response to chemoattractant agents. May control leukocyte polarization and migration by regulating the spatial accumulation of PIP3 and by regulating the organization of F-actin formation and integrin-based adhesion at the leading edge. Controls motility of dendritic cells. Together with PIK3CD is involved in natural killer (NK) cell development and migration towards the sites of inflammation. Participates in T-lymphocyte migration. Regulates T-lymphocyte proliferation, activation, and cytokine production. Together with PIK3CD participates in T-lymphocyte development. Required for B-lymphocyte development and signaling. Together with PIK3CD participates in neutrophil respiratory burst. Together with PIK3CD is involved in neutrophil chemotaxis and extravasation. Together with PIK3CB promotes platelet aggregation and thrombosis. Regulates alpha-IIb/beta-3 integrins (ITGA2B/ ITGB3) adhesive function in platelets downstream of P2Y12 through a lipid kinase activity-independent mechanism. May have also a lipid kinase activity-dependent function in platelet aggregation. Involved in endothelial progenitor cell migration. Negative regulator of cardiac contractility. Modulates cardiac contractility by anchoring protein kinase A (PKA) and PDE3B activation, reducing cAMP levels. Regulates cardiac contractility also by promoting beta-adrenergic receptor internalization by binding to GRK2 and by non-muscle tropomyosin phosphorylation. Also has serine/threonine protein kinase activity: both lipid and protein kinase activities are required for beta-adrenergic receptor endocytosis. May also have a scaffolding role in modulating cardiac contractility. Contributes to cardiac hypertrophy under pathological stress. Through simultaneous binding of PDE3B to RAPGEF3 and PIK3R6 is assembled in a signaling complex in which the PI3K gamma complex is activated by RAPGEF3 and which is involved in angiogenesis. In neutrophils, participates in a phospholipase C-activating N-formyl peptide-activated GPCR (G protein-coupled receptor) signaling pathway downstream of RASGRP4-mediated Ras-activation, to promote neutrophil functional responses. The sequence is that of Phosphatidylinositol 4,5-bisphosphate 3-kinase catalytic subunit gamma isoform (PIK3CG) from Homo sapiens (Human).